A 385-amino-acid chain; its full sequence is MRLLKSHPLLKLVNSYLIDASQPSNISYLWNFGSLLACCLIIQIVTGVTLAMHYSPNVLEAFNSIEHIMRDVNNGWLVRYLHSNTASAFFFLVYLHIGRGMYYGSYRAPRTLVWAIGTVILILMMATAFLGYVLPYGQMSLWGATVITNLISAIPWIGQDIVEFIWGGFSVNNATLNRFFALHFVLPFILAALVLMHLIALHDTAGSSNPLGVSGNYDRITFAPYYLFKDLITIFIFIYVLSSFVFFMPNVLGDSENYIMANPMQTPPAIVPEWYLLPFYAILRSIPNKLLGVIAMFSAILAIMLLPITDLGRSKGLQFRPLSKFAFWAFVVNFLILMKLGACHVESPFIELGQFSTIFYFSYFIFIVPVLSLIENTLVDLNYLK.

At 1-27 the chain is on the mitochondrial matrix side; sequence MRLLKSHPLLKLVNSYLIDASQPSNIS. Tyrosine 16 contributes to the a ubiquinone binding site. Residues 28-51 form a helical membrane-spanning segment; it reads YLWNFGSLLACCLIIQIVTGVTLA. Residues 52-74 lie on the Mitochondrial intermembrane side of the membrane; that stretch reads MHYSPNVLEAFNSIEHIMRDVNN. Residues 75–102 form a helical membrane-spanning segment; it reads GWLVRYLHSNTASAFFFLVYLHIGRGMY. The heme b site is built by histidine 82 and histidine 96. The Mitochondrial matrix segment spans residues 103 to 110; the sequence is YGSYRAPR. Residues 111-135 form a helical membrane-spanning segment; it reads TLVWAIGTVILILMMATAFLGYVLP. At 136–172 the chain is on the mitochondrial intermembrane side; it reads YGQMSLWGATVITNLISAIPWIGQDIVEFIWGGFSVN. The chain crosses the membrane as a helical span at residues 173–205; it reads NATLNRFFALHFVLPFILAALVLMHLIALHDTA. The heme b site is built by histidine 183 and histidine 197. Histidine 202 contacts a ubiquinone. Residues 206 to 224 are Mitochondrial matrix-facing; the sequence is GSSNPLGVSGNYDRITFAP. The chain crosses the membrane as a helical span at residues 225 to 247; sequence YYLFKDLITIFIFIYVLSSFVFF. Residues 248 to 288 lie on the Mitochondrial intermembrane side of the membrane; the sequence is MPNVLGDSENYIMANPMQTPPAIVPEWYLLPFYAILRSIPN. The helical transmembrane segment at 289-309 threads the bilayer; sequence KLLGVIAMFSAILAIMLLPIT. The Mitochondrial matrix segment spans residues 310–320; that stretch reads DLGRSKGLQFR. A helical membrane pass occupies residues 321 to 341; the sequence is PLSKFAFWAFVVNFLILMKLG. At 342 to 348 the chain is on the mitochondrial intermembrane side; that stretch reads ACHVESP. The chain crosses the membrane as a helical span at residues 349 to 365; that stretch reads FIELGQFSTIFYFSYFI. Residues 366 to 385 are Mitochondrial matrix-facing; sequence FIVPVLSLIENTLVDLNYLK.

This sequence belongs to the cytochrome b family. As to quaternary structure, component of the ubiquinol-cytochrome c oxidoreductase (cytochrome b-c1 complex, complex III, CIII), a multisubunit enzyme composed of 10 subunits. The complex is composed of 3 respiratory subunits cytochrome b (cob), cytochrome c1 (cyt-1) and Rieske protein (fes-1), 2 core protein subunits pep and ucr-1, and 5 low-molecular weight protein subunits qcr6, qcr7, qcr8, qcr9 and probably NCU16844/qcr10. The complex exists as an obligatory dimer and forms supercomplexes (SCs) in the inner mitochondrial membrane with NADH-ubiquinone oxidoreductase (complex I, CI) and cytochrome c oxidase (complex IV, CIV), resulting in different assemblies (supercomplexes SCI(1)III(2), SCIII(2)IV(1) and SCIII(2)IV(2) as well as higher order I(x)III(y)IV(z) megacomplexes). The cofactor is heme b.

The protein resides in the mitochondrion inner membrane. The enzyme catalyses a quinol + 2 Fe(III)-[cytochrome c](out) = a quinone + 2 Fe(II)-[cytochrome c](out) + 2 H(+)(out). In terms of biological role, component of the ubiquinol-cytochrome c oxidoreductase, a multisubunit transmembrane complex that is part of the mitochondrial electron transport chain which drives oxidative phosphorylation. The respiratory chain contains 3 multisubunit complexes succinate dehydrogenase (complex II, CII), ubiquinol-cytochrome c oxidoreductase (cytochrome b-c1 complex, complex III, CIII) and cytochrome c oxidase (complex IV, CIV), that cooperate to transfer electrons derived from NADH and succinate to molecular oxygen, creating an electrochemical gradient over the inner membrane that drives transmembrane transport and the ATP synthase. The cytochrome b-c1 complex catalyzes electron transfer from ubiquinol to cytochrome c, linking this redox reaction to translocation of protons across the mitochondrial inner membrane, with protons being carried across the membrane as hydrogens on the quinol. In the process called Q cycle, 2 protons are consumed from the matrix, 4 protons are released into the intermembrane space and 2 electrons are passed to cytochrome c. Cytochrome b is a catalytic core subunit containing 2 b-type hemes BL and BH topographically segregated in the quinone reduction (Qi) and quinol oxidation (Q0) sites on opposite sides of the membrane. This is Cytochrome b (cob) from Neurospora crassa (strain ATCC 24698 / 74-OR23-1A / CBS 708.71 / DSM 1257 / FGSC 987).